The sequence spans 186 residues: Inosine/xanthosine triphosphatase (186 aa).

Mg(2+) is bound at residue Gln75.

It belongs to the YjjX NTPase family. In terms of assembly, homodimer. Mg(2+) serves as cofactor. Mn(2+) is required as a cofactor.

The catalysed reaction is XTP + H2O = XDP + phosphate + H(+). It carries out the reaction ITP + H2O = IDP + phosphate + H(+). Its function is as follows. Phosphatase that hydrolyzes non-canonical purine nucleotides such as XTP and ITP to their respective diphosphate derivatives. Probably excludes non-canonical purines from DNA/RNA precursor pool, thus preventing their incorporation into DNA/RNA and avoiding chromosomal lesions. The chain is Inosine/xanthosine triphosphatase from Shewanella baltica (strain OS195).